The primary structure comprises 307 residues: Elongation factor Ts (307 aa).

The tract at residues 80-83 is involved in Mg(2+) ion dislocation from EF-Tu; the sequence is TDFV.

The protein belongs to the EF-Ts family.

It is found in the cytoplasm. Its function is as follows. Associates with the EF-Tu.GDP complex and induces the exchange of GDP to GTP. It remains bound to the aminoacyl-tRNA.EF-Tu.GTP complex up to the GTP hydrolysis stage on the ribosome. This Zymomonas mobilis subsp. mobilis (strain ATCC 31821 / ZM4 / CP4) protein is Elongation factor Ts (tsf).